The sequence spans 325 residues: Electron transfer flavoprotein subunit alpha (325 aa).

FAD is bound at residue 262 to 290; that stretch reads LYIACGISGAIQHLAGMSNSKVIVAINKD.

The protein belongs to the ETF alpha-subunit/FixB family. Heterodimer of an alpha and a beta subunit. It depends on FAD as a cofactor.

In terms of biological role, the electron transfer flavoprotein serves as a specific electron acceptor for other dehydrogenases. It transfers the electrons to the main respiratory chain via ETF-ubiquinone oxidoreductase (ETF dehydrogenase). The chain is Electron transfer flavoprotein subunit alpha (etfA) from Bacillus subtilis (strain 168).